The chain runs to 288 residues: HTH-type transcriptional regulator CzcR (288 aa).

The HTH lysR-type domain maps to 1 to 58; sequence MELRDLQIFQSVADQGSVSSAAKELNYVQSNVTTRIKQLENELKTPLFYRHKRGMTLT. The H-T-H motif DNA-binding region spans 18–37; the sequence is VSSAAKELNYVQSNVTTRIK.

Belongs to the LysR transcriptional regulatory family.

This Bacillus thuringiensis subsp. konkukian (strain 97-27) protein is HTH-type transcriptional regulator CzcR (czcR).